A 78-amino-acid polypeptide reads, in one-letter code: MVKLRLKRCGRKQRVIYRIVAIDVRSRRDGRALRKVGFYDPIKNQTYSNVPAILYFLEKGAQPTVTVHDISKKAEVFK.

This sequence belongs to the bacterial ribosomal protein bS16 family.

Its subcellular location is the plastid. The protein resides in the chloroplast. The polypeptide is Small ribosomal subunit protein bS16c (Amborella trichopoda).